Here is a 145-residue protein sequence, read N- to C-terminus: Peptide methionine sulfoxide reductase MsrB (145 aa).

One can recognise a MsrB domain in the interval S4–Y127. Residue C116 is the Nucleophile of the active site.

Belongs to the MsrB Met sulfoxide reductase family.

It catalyses the reaction L-methionyl-[protein] + [thioredoxin]-disulfide + H2O = L-methionyl-(R)-S-oxide-[protein] + [thioredoxin]-dithiol. This chain is Peptide methionine sulfoxide reductase MsrB, found in Streptococcus pyogenes serotype M6 (strain ATCC BAA-946 / MGAS10394).